The primary structure comprises 104 residues: Pyrimidine/purine nucleoside phosphorylase (104 aa).

Belongs to the nucleoside phosphorylase PpnP family.

The enzyme catalyses a purine D-ribonucleoside + phosphate = a purine nucleobase + alpha-D-ribose 1-phosphate. The catalysed reaction is adenosine + phosphate = alpha-D-ribose 1-phosphate + adenine. It carries out the reaction cytidine + phosphate = cytosine + alpha-D-ribose 1-phosphate. It catalyses the reaction guanosine + phosphate = alpha-D-ribose 1-phosphate + guanine. The enzyme catalyses inosine + phosphate = alpha-D-ribose 1-phosphate + hypoxanthine. The catalysed reaction is thymidine + phosphate = 2-deoxy-alpha-D-ribose 1-phosphate + thymine. It carries out the reaction uridine + phosphate = alpha-D-ribose 1-phosphate + uracil. It catalyses the reaction xanthosine + phosphate = alpha-D-ribose 1-phosphate + xanthine. Its function is as follows. Catalyzes the phosphorolysis of diverse nucleosides, yielding D-ribose 1-phosphate and the respective free bases. Can use uridine, adenosine, guanosine, cytidine, thymidine, inosine and xanthosine as substrates. Also catalyzes the reverse reactions. The chain is Pyrimidine/purine nucleoside phosphorylase from Leptospira borgpetersenii serovar Hardjo-bovis (strain L550).